Here is a 98-residue protein sequence, read N- to C-terminus: MSSIYMNILLAFTMALLGLLMYRSHLMSSLLCLEGMMLSLFILSTVTMLNTSFTLSSMMPVMLMVFAACEAAVGLALLVTVSNTYGLDYVQNLNLLQC.

Helical transmembrane passes span 1 to 21, 29 to 49, and 61 to 81; these read MSSI…GLLM, SLLC…VTML, and VMLM…LVTV.

The protein belongs to the complex I subunit 4L family. As to quaternary structure, core subunit of respiratory chain NADH dehydrogenase (Complex I) which is composed of 45 different subunits.

The protein localises to the mitochondrion inner membrane. The catalysed reaction is a ubiquinone + NADH + 5 H(+)(in) = a ubiquinol + NAD(+) + 4 H(+)(out). Its function is as follows. Core subunit of the mitochondrial membrane respiratory chain NADH dehydrogenase (Complex I) which catalyzes electron transfer from NADH through the respiratory chain, using ubiquinone as an electron acceptor. Part of the enzyme membrane arm which is embedded in the lipid bilayer and involved in proton translocation. In Tamandua tetradactyla (Southern anteater), this protein is NADH-ubiquinone oxidoreductase chain 4L (MT-ND4L).